The following is a 1210-amino-acid chain: V-type proton ATPase 116 kDa subunit a 4 (1210 aa).

Over 1 to 715 the chain is Cytoplasmic; it reads MSSFSNVGFV…YTIITFPFLF (715 aa). Residues 259-271 are compositionally biased toward low complexity; it reads SSKISFTSSSPSP. The segment at 259–292 is disordered; that stretch reads SSKISFTSSSPSPQRNPKNEAQKNSSSKREETSM. Residues 275–291 show a composition bias toward basic and acidic residues; it reads PKNEAQKNSSSKREETS. The stretch at 339 to 405 forms a coiled coil; the sequence is FVKQMRRCEE…EREFLDLNNN (67 aa). The chain crosses the membrane as a helical span at residues 716 to 736; it reads AVMFGDAAHGAILLLAALFFI. Over 737-760 the chain is Extracellular; it reads RNERKIESKKIRDEIFNTFYGGRY. A helical membrane pass occupies residues 761–781; that stretch reads IMMLMGIFSIYTGFLYNDAFA. The Cytoplasmic segment spans residues 782 to 855; it reads KSFNVFGSGW…SFLNSMKMKA (74 aa). Residues 856–876 traverse the membrane as a helical segment; sequence SVIIGITQMTFGVFLSVLNHI. Residues 877–892 are Extracellular-facing; the sequence is HFKSYIDIISNFIPQV. The chain crosses the membrane as a helical span at residues 893–913; sequence IFLSCIFIYLCIQIIVKWIFF. Residues 914 to 976 are Cytoplasmic-facing; the sequence is SVNAENVFGF…WYPNQRLVET (63 aa). Residues 977–997 traverse the membrane as a helical segment; sequence ILISISLACIPIMLFGKPLWV. The Extracellular segment spans residues 998 to 1127; sequence RFVTSKRHKL…NETIAMCLKP (130 aa). N-linked (GlcNAc...) asparagine glycosylation is found at asparagine 1010, asparagine 1019, and asparagine 1118. Residues 1128–1148 form a helical membrane-spanning segment; it reads VVACVAFFIFASLSLSILIMM. The Cytoplasmic segment spans residues 1149–1210; the sequence is EGLSAFLHAL…DISSGQHLHI (62 aa).

This sequence belongs to the V-ATPase 116 kDa subunit family. V-ATPase is a heteromultimeric enzyme made up of two complexes: the ATP-hydrolytic V1 complex and the proton translocation V0 complex. The V1 complex consists of three catalytic AB heterodimers that form a heterohexamer, three peripheral stalks each consisting of EG heterodimers, one central rotor including subunits D and F, and the regulatory subunits C and H. The proton translocation complex V0 consists of the proton transport subunit a, a ring of proteolipid subunits c9c'', rotary subunit d, subunits e and f, and the accessory subunits vah-19/Ac45 and vah-20/PRR. As to expression, expressed in uterus.

It is found in the membrane. Subunit of the V0 complex of vacuolar(H+)-ATPase (V-ATPase), a multisubunit enzyme composed of a peripheral complex (V1) that hydrolyzes ATP and a membrane integral complex (V0) that translocates protons. V-ATPase is responsible for acidifying and maintaining the pH of intracellular compartments and in some cell types, is targeted to the plasma membrane, where it is responsible for acidifying the extracellular environment. The polypeptide is V-type proton ATPase 116 kDa subunit a 4 (Caenorhabditis elegans).